A 577-amino-acid polypeptide reads, in one-letter code: Proline--tRNA ligase (577 aa).

Belongs to the class-II aminoacyl-tRNA synthetase family. ProS type 1 subfamily. As to quaternary structure, homodimer.

The protein localises to the cytoplasm. It carries out the reaction tRNA(Pro) + L-proline + ATP = L-prolyl-tRNA(Pro) + AMP + diphosphate. Catalyzes the attachment of proline to tRNA(Pro) in a two-step reaction: proline is first activated by ATP to form Pro-AMP and then transferred to the acceptor end of tRNA(Pro). As ProRS can inadvertently accommodate and process non-cognate amino acids such as alanine and cysteine, to avoid such errors it has two additional distinct editing activities against alanine. One activity is designated as 'pretransfer' editing and involves the tRNA(Pro)-independent hydrolysis of activated Ala-AMP. The other activity is designated 'posttransfer' editing and involves deacylation of mischarged Ala-tRNA(Pro). The misacylated Cys-tRNA(Pro) is not edited by ProRS. This is Proline--tRNA ligase from Thermotoga maritima (strain ATCC 43589 / DSM 3109 / JCM 10099 / NBRC 100826 / MSB8).